The following is a 262-amino-acid chain: MNPSVKKKRVIHQYREGQFTCKTDEVVEEFPLTVIVNGEEFVTLVCSPDHLKELVIGFLASEGVIRFENEIKRFTIDESMGFAYVDLVHSSEFQSSDFTKRVIGSCCGKGRHFYFLQDVKTAKTAIDRINISADTCMRLMKSLQEESQLFQHTGGVHNAGLCDTEKLFITRTDIGRHNALDKIYGYCLLHQIPLRDKILVFSGRISSEVLLKAAKLGVSIVISKSAPTELALNMAEELNITTVGFVRGESFNIYTHHQRITE.

Cysteine 107 serves as the catalytic Cysteine persulfide intermediate.

It belongs to the FdhD family.

It localises to the cytoplasm. Its function is as follows. Required for formate dehydrogenase (FDH) activity. Acts as a sulfur carrier protein that transfers sulfur from IscS to the molybdenum cofactor prior to its insertion into FDH. The sequence is that of Sulfur carrier protein FdhD from Bacillus pumilus (strain SAFR-032).